Reading from the N-terminus, the 319-residue chain is Carbonic anhydrase, chloroplastic (319 aa).

Residues 1–98 constitute a chloroplast transit peptide; sequence MSTINGCLTS…AASKVAQITS (98 aa).

It belongs to the beta-class carbonic anhydrase family. As to quaternary structure, homohexamer.

Its subcellular location is the plastid. It is found in the chloroplast stroma. It catalyses the reaction hydrogencarbonate + H(+) = CO2 + H2O. In terms of biological role, reversible hydration of carbon dioxide. The polypeptide is Carbonic anhydrase, chloroplastic (Spinacia oleracea (Spinach)).